A 584-amino-acid chain; its full sequence is Endogenous retrovirus group FC1 Env polyprotein (584 aa).

The first 22 residues, 1–22, serve as a signal peptide directing secretion; sequence MARPSPLCLLLLLTLLPPIVPS. Residues 23–514 lie on the Extracellular side of the membrane; the sequence is NSLLTEPPFR…NYGGGWWQSP (492 aa). N-linked (GlcNAc...) asparagine glycans are attached at residues asparagine 69 and asparagine 247. A CXXC motif is present at residues 251–254; the sequence is CFLC. N-linked (GlcNAc...) asparagine glycans are attached at residues asparagine 272, asparagine 276, asparagine 308, asparagine 313, asparagine 322, asparagine 334, asparagine 342, and asparagine 346. The tract at residues 388-413 is fusion peptide; the sequence is PLVIGVSLTSSLVASGLGTGAIVHFI. The CKS-17 signature appears at 449-465; that stretch reads MQNRRALDLLTADKGGT. Cysteine 466 and cysteine 473 are oxidised to a cystine. The CX6CC signature appears at 466 to 474; it reads CMFLGEECC. A glycan (N-linked (GlcNAc...) asparagine) is linked at asparagine 478. The chain crosses the membrane as a helical span at residues 515–540; sequence LTTWIIPFISPILIICLLLLIAPCVL. Residues 541-584 are Cytoplasmic-facing; it reads KFIKNRISEVSRVTVNQMLLHPYSRLPTSEDHYDVALTQQEAAR.

It belongs to the gamma type-C retroviral envelope protein family. HERV class-I F(c)1 env subfamily. The surface (SU) and transmembrane (TM) proteins form a heterodimer. SU and TM are attached by noncovalent interactions or by a labile interchain disulfide bond. Specific enzymatic cleavages in vivo yield the mature SU and TM proteins. Post-translationally, the CXXC motif is highly conserved across a broad range of retroviral envelope proteins. It is thought to participate in the formation of a labile disulfide bond possibly with the CX6CC motif present in the transmembrane protein.

Its subcellular location is the virion. The protein localises to the cell membrane. In terms of biological role, retroviral envelope proteins mediate receptor recognition and membrane fusion during early infection. Endogenous envelope proteins may have kept, lost or modified their original function during evolution. This endogenous envelope protein has lost its original fusogenic properties. SU mediates receptor recognition. Its function is as follows. TM anchors the envelope heterodimer to the viral membrane through one transmembrane domain. The other hydrophobic domain, called fusion peptide, mediates fusion of the viral membrane with the target cell membrane. This is Endogenous retrovirus group FC1 Env polyprotein (ERVFC1) from Pan troglodytes (Chimpanzee).